Consider the following 255-residue polypeptide: MILGIDIGNTTSEFGFIYNGKRINSYKLRSDHTKTVDDWLIDISAIFSIEGMKKESVKDCVISSVVPPLEDRIYSACKKFLGKKPLRIGKELKVPIKINYKNPEEVGIDRVVNAFAGVKRYGKPLILVDLGTAITFDVVNQKGEYEGGAIFPGIDSSIEALFSKTAKLPKVSIENVKKVVGKTTVESIQSGIFFGYISLIEGMIKRIIREKGFSPKVILTGGSGEIITKGLEIDHIFDMYLSLEGIYDIYSYHGN.

Position 6–13 (6–13) interacts with ATP; that stretch reads DIGNTTSE. Substrate-binding positions include Y100 and 107-110; that span reads GIDR. Catalysis depends on D109, which acts as the Proton acceptor. D129 serves as a coordination point for K(+). Residue T132 coordinates ATP. Substrate is bound at residue T184.

The protein belongs to the type III pantothenate kinase family. In terms of assembly, homodimer. NH4(+) serves as cofactor. The cofactor is K(+).

It localises to the cytoplasm. The enzyme catalyses (R)-pantothenate + ATP = (R)-4'-phosphopantothenate + ADP + H(+). Its pathway is cofactor biosynthesis; coenzyme A biosynthesis; CoA from (R)-pantothenate: step 1/5. In terms of biological role, catalyzes the phosphorylation of pantothenate (Pan), the first step in CoA biosynthesis. This is Type III pantothenate kinase from Persephonella marina (strain DSM 14350 / EX-H1).